Reading from the N-terminus, the 814-residue chain is Acyl-coenzyme A dehydrogenase (814 aa).

Glutamate 497 acts as the Proton acceptor in catalysis.

This sequence belongs to the acyl-CoA dehydrogenase family. The cofactor is FAD.

The enzyme catalyses a medium-chain 2,3-saturated fatty acyl-CoA + oxidized [electron-transfer flavoprotein] + H(+) = a medium-chain (2E)-enoyl-CoA + reduced [electron-transfer flavoprotein]. It carries out the reaction a long-chain 2,3-saturated fatty acyl-CoA + oxidized [electron-transfer flavoprotein] + H(+) = a long-chain (2E)-enoyl-CoA + reduced [electron-transfer flavoprotein]. It participates in lipid metabolism; fatty acid beta-oxidation. Functionally, catalyzes the dehydrogenation of acyl-coenzymes A (acyl-CoAs) to 2-enoyl-CoAs, the first step of the beta-oxidation cycle of fatty acid degradation. Is required for the utilization of medium- and long-chain fatty acids as sole carbon sources for growth. Is needed for bacterial survival during carbone-source starvation. The chain is Acyl-coenzyme A dehydrogenase (fadE) from Salmonella typhi.